Consider the following 890-residue polypeptide: DNA mismatch repair protein MutS (890 aa).

An ATP-binding site is contributed by 645–652 (GPNMAGKS).

It belongs to the DNA mismatch repair MutS family.

In terms of biological role, this protein is involved in the repair of mismatches in DNA. It is possible that it carries out the mismatch recognition step. This protein has a weak ATPase activity. The protein is DNA mismatch repair protein MutS of Rickettsia conorii (strain ATCC VR-613 / Malish 7).